Consider the following 478-residue polypeptide: Probable cytosolic Fe-S cluster assembly factor CPIJ010948 (478 aa).

[4Fe-4S] cluster is bound by residues C23, C69, C72, C75, C189, C245, C396, and C400.

Belongs to the NARF family.

Component of the cytosolic iron-sulfur (Fe/S) protein assembly machinery. Required for maturation of extramitochondrial Fe/S proteins. This Culex quinquefasciatus (Southern house mosquito) protein is Probable cytosolic Fe-S cluster assembly factor CPIJ010948.